The sequence spans 385 residues: 8-amino-7-oxononanoate synthase (385 aa).

R21 contacts substrate. Pyridoxal 5'-phosphate is bound at residue G108–F109. H133 provides a ligand contact to substrate. Pyridoxal 5'-phosphate-binding residues include S179, H207, and T233. At K236 the chain carries N6-(pyridoxal phosphate)lysine. Position 352 (T352) interacts with substrate.

This sequence belongs to the class-II pyridoxal-phosphate-dependent aminotransferase family. BioF subfamily. Homodimer. Requires pyridoxal 5'-phosphate as cofactor.

It catalyses the reaction 6-carboxyhexanoyl-[ACP] + L-alanine + H(+) = (8S)-8-amino-7-oxononanoate + holo-[ACP] + CO2. It participates in cofactor biosynthesis; biotin biosynthesis. Functionally, catalyzes the decarboxylative condensation of pimeloyl-[acyl-carrier protein] and L-alanine to produce 8-amino-7-oxononanoate (AON), [acyl-carrier protein], and carbon dioxide. The polypeptide is 8-amino-7-oxononanoate synthase (Salmonella newport (strain SL254)).